A 286-amino-acid chain; its full sequence is Translocon-associated protein subunit alpha (286 aa).

A signal peptide spans 1 to 21 (MRLLPRLLLLLLLVFPATVLL). The Lumenal segment spans residues 22–207 (RGGPGGSLAE…EREDGLDGQT (186 aa)). The interval 28 to 83 (SLAEAQDLSEDEETVEDSVIEDEDDEAEVEEDEPTDLAEDREEEDVSGEPEASPSA) is disordered. Positions 34 to 75 (DLSEDEETVEDSVIEDEDDEAEVEEDEPTDLAEDREEEDVSG) are enriched in acidic residues. N-linked (GlcNAc...) asparagine glycosylation is found at asparagine 136 and asparagine 191. A helical transmembrane segment spans residues 208–228 (IFMYMSLAGLGLLVVVGLHQL). The Cytoplasmic portion of the chain corresponds to 229–286 (LESRNRKRPIQKVEMGTSSQNDVDMSWIPQETLNQINKASPRRLPRKRPQKRSVGSDE). Phosphoserine is present on serine 247. Threonine 260 carries the post-translational modification Phosphothreonine. Residues 264–286 (INKASPRRLPRKRPQKRSVGSDE) form a disordered region. The residue at position 268 (serine 268) is a Phosphoserine. Residues 268-279 (SPRRLPRKRPQK) are compositionally biased toward basic residues.

The protein belongs to the TRAP-alpha family. Heterotetramer of TRAP-alpha, TRAP-beta, TRAP-delta and TRAP-gamma. Interacts with palmitoylated calnexin (CALX), the interaction is required for efficient folding of glycosylated proteins. Post-translationally, phosphorylated in its cytoplasmic tail.

The protein resides in the endoplasmic reticulum membrane. Its function is as follows. TRAP proteins are part of a complex whose function is to bind calcium to the ER membrane and thereby regulate the retention of ER resident proteins. May be involved in the recycling of the translocation apparatus after completion of the translocation process or may function as a membrane-bound chaperone facilitating folding of translocated proteins. This is Translocon-associated protein subunit alpha (SSR1) from Oryctolagus cuniculus (Rabbit).